The following is a 430-amino-acid chain: Trigger factor (430 aa).

In terms of domain architecture, PPIase FKBP-type spans 163 to 248 (GNIAIIDFKG…VKEIKVKEIP (86 aa)).

Belongs to the FKBP-type PPIase family. Tig subfamily.

Its subcellular location is the cytoplasm. The enzyme catalyses [protein]-peptidylproline (omega=180) = [protein]-peptidylproline (omega=0). Involved in protein export. Acts as a chaperone by maintaining the newly synthesized protein in an open conformation. Functions as a peptidyl-prolyl cis-trans isomerase. This chain is Trigger factor, found in Clostridium kluyveri (strain NBRC 12016).